The sequence spans 210 residues: Quaternary-amine-specific corrinoid protein (210 aa).

The region spanning 1 to 90 (MADWKNLTQA…VLGSGDTAVA (90 aa)) is the B12-binding N-terminal domain. The region spanning 90–210 (AGTILIGTAH…GVKICQAWVG (121 aa)) is the B12-binding domain. Histidine 103 contributes to the methylcob(III)alamin binding site.

Belongs to the methylamine corrinoid protein family. As to quaternary structure, the proline betaine:THF methyl transfer system is composed of two methyltransferases, MtpB and MtqA, and the corrinoid protein MtqC. The L-carnitine:THF methyl transfer system is composed of two methyltransferases, MtcB and MtqA, and the corrinoid protein MtqC.

Functionally, involved in the degradation of the quaternary amines L-proline betaine and L-carnitine. Component of a corrinoid-dependent methyltransferase system that transfers a methyl group from L-proline betaine or L-carnitine to tetrahydrofolate (THF), forming methyl-THF, a key intermediate in the Wood-Ljungdahl acetogenesis pathway. Acts as a methyl group carrier between MtpB or MtcB, and MtqA. A methyl group from L-proline betaine or L-carnitine is first transferred to the corrinoid prosthetic group of MtqC by MtpB or MtcB, respectively, and then transferred from MtqC to THF by MtqA. The sequence is that of Quaternary-amine-specific corrinoid protein from Eubacterium limosum.